The following is a 1161-amino-acid chain: Hamartin (1161 aa).

Lys30 is covalently cross-linked (Glycyl lysine isopeptide (Lys-Gly) (interchain with G-Cter in ubiquitin)). Disordered stretches follow at residues 296–336 (PYVD…PSTR) and 353–591 (CGMT…QRGV). The span at 303–336 (SYGGSTSTPSSSSRLMLFSPPGQLPQSLSSPSTR) shows a compositional bias: low complexity. Residues 393-402 (TSPPPAPPCP) show a composition bias toward pro residues. Positions 403 to 784 (QDDCVHGSAA…QIRQLQHDRE (382 aa)) are mediates interaction with WDR45B. A compositionally biased stretch (basic and acidic residues) spans 471–484 (EKDKEEAAISKELS). 6 positions are modified to phosphoserine: Ser484, Ser502, Ser508, Ser518, Ser592, and Ser595. The segment covering 509-529 (LSGSQRKTHSAASGTQGSSVN) has biased composition (polar residues). Coiled coils occupy residues 721-849 (IRAA…NRQL), 879-917 (TAYR…AKKD), and 967-991 (EKDG…ERLD). 2 disordered regions span residues 1003 to 1077 (GHNE…SLPS) and 1092 to 1161 (NKSE…PEHS). A compositionally biased stretch (basic and acidic residues) spans 1004–1017 (HNEEASGHNGETRT). The segment covering 1026-1043 (SCGGRVTGGSSSSSSELS) has biased composition (low complexity). Polar residues predominate over residues 1064 to 1077 (PSSSIPTTVGSLPS). Ser1094 is modified (phosphoserine). The segment covering 1103–1113 (VTMSSSSLSET) has biased composition (low complexity). Basic and acidic residues-rich tracts occupy residues 1114–1124 (LKTELGKDSGT) and 1152–1161 (DYNETHPEHS).

As to quaternary structure, component of the TSC-TBC complex (also named Rhebulator complex), composed of 2 molecules of TSC1, 2 molecules of TSC2 and 1 molecule of TBC1D7. Probably forms a complex composed of chaperones HSP90 and HSP70, co-chaperones STIP1/HOP, CDC37, PPP5C, PTGES3/p23, TSC1 and client protein TSC2. Forms a complex composed of chaperones HSP90 and HSP70, co-chaperones CDC37, PPP5C, TSC1 and client protein TSC2, CDK4, AKT, RAF1 and NR3C1; this complex does not contain co-chaperones STIP1/HOP and PTGES3/p23. Forms a complex containing HSP90AA1, TSC1 and TSC2; TSC1 is required to recruit TCS2 to the complex. Interacts (via C-terminus) with the closed form of HSP90AA1 (via the middle domain and TPR repeat-binding motif). Interacts with DOCK7. Interacts with FBXW5. Interacts with WDR45B. Interacts with RPAP3 and URI1. In terms of processing, phosphorylation at Ser-502 does not affect interaction with TSC2. 'Lys-63'-linked ubiquitinated at Lys-30 by PELI1; the ubiquitination promotes TSC1/TSC2 complex stability.

The protein localises to the lysosome membrane. The protein resides in the cytoplasm. It is found in the cytosol. In terms of biological role, non-catalytic component of the TSC-TBC complex, a multiprotein complex that acts as a negative regulator of the canonical mTORC1 complex, an evolutionarily conserved central nutrient sensor that stimulates anabolic reactions and macromolecule biosynthesis to promote cellular biomass generation and growth. The TSC-TBC complex acts as a GTPase-activating protein (GAP) for the small GTPase RHEB, a direct activator of the protein kinase activity of mTORC1. In absence of nutrients, the TSC-TBC complex inhibits mTORC1, thereby preventing phosphorylation of ribosomal protein S6 kinase (RPS6KB1 and RPS6KB2) and EIF4EBP1 (4E-BP1) by the mTORC1 signaling. The TSC-TBC complex is inactivated in response to nutrients, relieving inhibition of mTORC1. Within the TSC-TBC complex, TSC1 stabilizes TSC2 and prevents TSC2 self-aggregation. Involved in microtubule-mediated protein transport via its ability to regulate mTORC1 signaling. Also acts as a co-chaperone for HSP90AA1 facilitating HSP90AA1 chaperoning of protein clients such as kinases, TSC2 and glucocorticoid receptor NR3C1. Increases ATP binding to HSP90AA1 and inhibits HSP90AA1 ATPase activity. Competes with the activating co-chaperone AHSA1 for binding to HSP90AA1, thereby providing a reciprocal regulatory mechanism for chaperoning of client proteins. Recruits TSC2 to HSP90AA1 and stabilizes TSC2 by preventing the interaction between TSC2 and ubiquitin ligase HERC1. This chain is Hamartin, found in Mus musculus (Mouse).